Here is a 274-residue protein sequence, read N- to C-terminus: Formamidopyrimidine-DNA glycosylase (274 aa).

The Schiff-base intermediate with DNA role is filled by proline 2. Catalysis depends on glutamate 3, which acts as the Proton donor. Lysine 58 serves as the catalytic Proton donor; for beta-elimination activity. Residues histidine 91, arginine 110, and lysine 152 each coordinate DNA. The FPG-type zinc finger occupies 237–271 (KVYGRKNLPCLVCENKIETVVIAGRHSAFCPHCQP). The active-site Proton donor; for delta-elimination activity is the arginine 261.

It belongs to the FPG family. In terms of assembly, monomer. It depends on Zn(2+) as a cofactor.

It carries out the reaction Hydrolysis of DNA containing ring-opened 7-methylguanine residues, releasing 2,6-diamino-4-hydroxy-5-(N-methyl)formamidopyrimidine.. The catalysed reaction is 2'-deoxyribonucleotide-(2'-deoxyribose 5'-phosphate)-2'-deoxyribonucleotide-DNA = a 3'-end 2'-deoxyribonucleotide-(2,3-dehydro-2,3-deoxyribose 5'-phosphate)-DNA + a 5'-end 5'-phospho-2'-deoxyribonucleoside-DNA + H(+). Its function is as follows. Involved in base excision repair of DNA damaged by oxidation or by mutagenic agents. Acts as a DNA glycosylase that recognizes and removes damaged bases. Has a preference for oxidized purines, such as 7,8-dihydro-8-oxoguanine (8-oxoG). Has AP (apurinic/apyrimidinic) lyase activity and introduces nicks in the DNA strand. Cleaves the DNA backbone by beta-delta elimination to generate a single-strand break at the site of the removed base with both 3'- and 5'-phosphates. The polypeptide is Formamidopyrimidine-DNA glycosylase (Legionella pneumophila (strain Paris)).